Reading from the N-terminus, the 353-residue chain is Photosystem II protein D1 (353 aa).

At Thr2 the chain carries N-acetylthreonine. Thr2 bears the Phosphothreonine mark. Helical transmembrane passes span 29-46 (YIGW…TATS), 118-133 (HFLL…EWEL), and 142-156 (WIAV…AATA). His118 serves as a coordination point for chlorophyll a. A pheophytin a-binding site is contributed by Tyr126. [CaMn4O5] cluster is bound by residues Asp170 and Glu189. A helical membrane pass occupies residues 197 to 218 (FHMLGVAGVFGGSLFSAMHGSL). Residue His198 coordinates chlorophyll a. Residues His215 and 264-265 (SF) contribute to the a quinone site. His215 lines the Fe cation pocket. His272 provides a ligand contact to Fe cation. A helical transmembrane segment spans residues 274–288 (FLAAWPVVGIWFTAL). His332, Glu333, Asp342, and Ala344 together coordinate [CaMn4O5] cluster. The propeptide occupies 345–353 (AVEAPSTNG).

It belongs to the reaction center PufL/M/PsbA/D family. PSII is composed of 1 copy each of membrane proteins PsbA, PsbB, PsbC, PsbD, PsbE, PsbF, PsbH, PsbI, PsbJ, PsbK, PsbL, PsbM, PsbT, PsbX, PsbY, PsbZ, Psb30/Ycf12, at least 3 peripheral proteins of the oxygen-evolving complex and a large number of cofactors. It forms dimeric complexes. It depends on The D1/D2 heterodimer binds P680, chlorophylls that are the primary electron donor of PSII, and subsequent electron acceptors. It shares a non-heme iron and each subunit binds pheophytin, quinone, additional chlorophylls, carotenoids and lipids. D1 provides most of the ligands for the Mn4-Ca-O5 cluster of the oxygen-evolving complex (OEC). There is also a Cl(-1) ion associated with D1 and D2, which is required for oxygen evolution. The PSII complex binds additional chlorophylls, carotenoids and specific lipids. as a cofactor. In terms of processing, tyr-161 forms a radical intermediate that is referred to as redox-active TyrZ, YZ or Y-Z. C-terminally processed by CTPA; processing is essential to allow assembly of the oxygen-evolving complex and thus photosynthetic growth.

It is found in the plastid. The protein localises to the chloroplast thylakoid membrane. It catalyses the reaction 2 a plastoquinone + 4 hnu + 2 H2O = 2 a plastoquinol + O2. Photosystem II (PSII) is a light-driven water:plastoquinone oxidoreductase that uses light energy to abstract electrons from H(2)O, generating O(2) and a proton gradient subsequently used for ATP formation. It consists of a core antenna complex that captures photons, and an electron transfer chain that converts photonic excitation into a charge separation. The D1/D2 (PsbA/PsbD) reaction center heterodimer binds P680, the primary electron donor of PSII as well as several subsequent electron acceptors. This is Photosystem II protein D1 from Nymphaea alba (White water-lily).